The following is a 239-amino-acid chain: tRNA (guanine-N(7)-)-methyltransferase (239 aa).

Residues 1 to 13 (MEAEVQQGQQSPE) show a composition bias toward polar residues. Residues 1–30 (MEAEVQQGQQSPEGQLEKRPPSPPWAGIPL) form a disordered region. Residues Asp72, Glu97, Asn124, and Asp147 each coordinate S-adenosyl-L-methionine. Asp147 is an active-site residue. Residues Lys151 and Asp183 each coordinate substrate.

This sequence belongs to the class I-like SAM-binding methyltransferase superfamily. TrmB family.

It carries out the reaction guanosine(46) in tRNA + S-adenosyl-L-methionine = N(7)-methylguanosine(46) in tRNA + S-adenosyl-L-homocysteine. It participates in tRNA modification; N(7)-methylguanine-tRNA biosynthesis. Functionally, catalyzes the formation of N(7)-methylguanine at position 46 (m7G46) in tRNA. This chain is tRNA (guanine-N(7)-)-methyltransferase, found in Synechococcus sp. (strain JA-2-3B'a(2-13)) (Cyanobacteria bacterium Yellowstone B-Prime).